A 439-amino-acid polypeptide reads, in one-letter code: Vacuolar zinc transporter COT1 (439 aa).

Topologically, residues 1–9 (MKLGSKQVK) are cytoplasmic. A helical membrane pass occupies residues 10-30 (IISLLLLDTVFFGIEITTGYL). The Vacuolar portion of the chain corresponds to 31 to 33 (SHS). Residues 34–54 (LALIADSFHMLNDIISLVVAL) form a helical membrane-spanning segment. Over 55–76 (WAVNVAKNRNPDSTYTYGWKRA) the chain is Cytoplasmic. A helical transmembrane segment spans residues 77 to 97 (EILGALINAVFLIALCVSILI). Topologically, residues 98-113 (EALQRIIAPPVIENPK) are vacuolar. The chain crosses the membrane as a helical span at residues 114-134 (FVLYVGVAGLISNTVGLFLFH). Residues 135–244 (DNDQEHGHGH…RKRSLNMHGV (110 aa)) lie on the Cytoplasmic side of the membrane. 3 consecutive short sequence motifs (histidine repeat) follow at residues 140-144 (HGHGH), 165-169 (HTHAH), and 219-223 (SSHTI). Polar residues predominate over residues 207–230 (PENASKTPSYSTSSHTIASGGNYT). The interval 207–231 (PENASKTPSYSTSSHTIASGGNYTE) is disordered. At Ser225 the chain carries Phosphoserine. The helical transmembrane segment at 245–265 (FLHVLGDALGNIGVMLSAFFI) threads the bilayer. At 266–274 (WKTDYSWKY) the chain is on the vacuolar side. Residues 275-295 (YTDPLVSLIITGIIFSSALPL) form a helical membrane-spanning segment. The Cytoplasmic portion of the chain corresponds to 296 to 439 (SCKASKILLQ…CNTADCLEDH (144 aa)). Residue Lys301 forms a Glycyl lysine isopeptide (Lys-Gly) (interchain with G-Cter in ubiquitin) linkage. Residues 388 to 402 (TSTERAGDSQGDHLQ) are compositionally biased toward basic and acidic residues. Residues 388-408 (TSTERAGDSQGDHLQNDPLSL) are disordered.

It belongs to the cation diffusion facilitator (CDF) transporter (TC 2.A.4) family. SLC30A subfamily.

The protein resides in the vacuole membrane. The catalysed reaction is Zn(2+)(in) = Zn(2+)(out). Vacuolar transporter that regulates zinc homeostasis by mediating zinc transport and storage into the vacuole. Plays a role in resistance to zinc shock resulting from sudden influx of zinc into cytoplasm. May also participate in the regulation of cobalt levels under normal physiological conditions and may be important in the supply of metal that is required for metalloenzyme or cofactor synthesis. Involved in the resistance to cobalt and rhodium ions. The sequence is that of Vacuolar zinc transporter COT1 from Saccharomyces cerevisiae (strain ATCC 204508 / S288c) (Baker's yeast).